A 532-amino-acid polypeptide reads, in one-letter code: 5-methylcytosine-modifying enzyme 1 (532 aa).

Residue 335–337 participates in L-ascorbate binding; that stretch reads SLT. Residues His345, Asp347, and His397 each contribute to the Fe cation site. Position 397–399 (397–399) interacts with L-ascorbate; that stretch reads HGT.

Belongs to the TET family. The cofactor is Fe(2+).

It is found in the nucleus. The enzyme catalyses a 5-methyl-2'-deoxycytidine in DNA + L-ascorbate + O2 = a (8S,9S)-5-glyceryl-2'-deoxycytidine in DNA + glyoxylate + CO2. The catalysed reaction is a 5-methyl-2'-deoxycytidine in DNA + L-ascorbate + O2 = a (8S,9R)-5-glyceryl-2'-deoxycytidine in DNA + glyoxylate + CO2. Functionally, dioxygenase that catalyzes DNA modification by mediating the conversion of the modified genomic base 5-methylcytosine (5mC) into 5-glyceryl-methylcytosine (5gmC). Catalyzes the conjugation of a glyceryl moiety from L-ascorbate (vitamin C) to the methyl group of 5mC through a carbon-carbon bond. 5gmC DNA modification may be required during photosynthesis as an epigenetic mark that couteracts DNA methylation. The chain is 5-methylcytosine-modifying enzyme 1 from Chlamydomonas reinhardtii (Chlamydomonas smithii).